The sequence spans 218 residues: MKDSALTLKRVRIGKFSESMVEERPTLNLFEKVEFNPVPTALVDQLPTEPLVEATLLEKEAITFVDTYATSEAHDQIATFVLEQSMETEVVEKEAIETAIVAPAPDLVEEKAVLVEEVLVEPTATEAVTTEENQVSTTSVTKIKTKRSNTKKVTSETLVASKSVKTKKLITPNRVSSGNVNITLWQVDKKSTNLTKTKTDLFGKKHQFKGPQLISYKK.

This is an uncharacterized protein from Mycoplasma pneumoniae (strain ATCC 29342 / M129 / Subtype 1) (Mycoplasmoides pneumoniae).